We begin with the raw amino-acid sequence, 1041 residues long: Collagen alpha-2(I) chain (1041 aa).

The disordered stretch occupies residues 1–1041; sequence SGGFDFSFLP…FGYEGDFYRA (1041 aa). 4 positions are modified to 4-hydroxyproline: Pro10, Pro13, Pro39, and Pro45. Low complexity-rich tracts occupy residues 25-45 and 55-76; these read LGPGPMGLMGPRGPPGASGAP and EPGEPGQTGPAGARGPAGPPGK. Positions 77 to 91 are enriched in basic and acidic residues; it reads AGEDGHPGKPGRPGE. Lys113 is modified (5-hydroxylysine; alternate). O-linked (Gal...) hydroxylysine; alternate glycosylation occurs at Lys113. 2 stretches are compositionally biased toward low complexity: residues 174 to 189 and 235 to 256; these read SVGPVGPAGPIGSAGP and PGANGLTGAKGAAGLPGVAGAP. A compositionally biased stretch (gly residues) spans 290 to 299; sequence GESGGKGEPG. The span at 300-310 shows a compositional bias: low complexity; the sequence is SAGPQGPPGSS. A compositionally biased stretch (gly residues) spans 332–341; the sequence is GLRGGPGSRG. Residues 354-370 show a composition bias toward low complexity; the sequence is PAGARGASGPAGVRGPS. Pro376 and Pro379 each carry 4-hydroxyproline. Residues 405–424 show a composition bias toward low complexity; that stretch reads LPGIDGRPGPIGPAGARGEA. Positions 466-475 are enriched in gly residues; it reads GVQGGKGEQG. 2 stretches are compositionally biased toward low complexity: residues 522 to 539 and 551 to 561; these read SGESGAVGPSGAIGSRGP and EPGVVGAPGTA. Residues 562–571 are compositionally biased toward gly residues; the sequence is GPAGSGGLPG. 2 stretches are compositionally biased toward low complexity: residues 594–638 and 645–665; these read VGTT…PRGS and VGPAGPNGFAGPAGAAGQPGA. The segment covering 666 to 675 has biased composition (basic and acidic residues); it reads KGERGTKGPK. The segment covering 683–693 has biased composition (low complexity); sequence PTGPVGSAGPA. Gly residues predominate over residues 703–712; that stretch reads GSRGDGGPPG. Low complexity predominate over residues 714-723; it reads TGFPGAAGRT. Gly residues predominate over residues 754-768; that stretch reads GPVGRGETGAGGPPG. 2 stretches are compositionally biased toward low complexity: residues 769–803 and 811–821; these read FTGEKGPSGEPGTAGPPGTAGPQGLLGAPGILGLP and LPGVAGAVGEP. Over residues 822 to 840 the composition is skewed to gly residues; sequence GPLGIGPPGARGPSGGVPG. Composition is skewed to low complexity over residues 874-887 and 903-918; these read YAGNPGPVGAAGAP and EPGPVGSAGPVGALGP. Over residues 928–939 the composition is skewed to basic and acidic residues; sequence RGDKGEAGDKGP. Residues 1013 to 1023 show a composition bias toward pro residues; sequence PAGPPGPPGPP.

This sequence belongs to the fibrillar collagen family. In terms of assembly, trimers of one alpha 2(I) and two alpha 1(I) chains. Interacts (via C-terminus) with TMEM131 (via PapD-L domain); the interaction is direct and is involved in assembly and TRAPPIII ER-to-Golgi transport complex-dependent secretion of collagen. Prolines at the third position of the tripeptide repeating unit (G-X-Y) are hydroxylated in some or all of the chains. Expressed in bones.

It is found in the secreted. The protein localises to the extracellular space. The protein resides in the extracellular matrix. Its function is as follows. Type I collagen is a member of group I collagen (fibrillar forming collagen). This chain is Collagen alpha-2(I) chain, found in Paramylodon harlani (Harlan's ground sloth).